The following is a 306-amino-acid chain: ATP phosphoribosyltransferase (306 aa).

It belongs to the ATP phosphoribosyltransferase family.

The protein resides in the cytoplasm. It catalyses the reaction 1-(5-phospho-beta-D-ribosyl)-ATP + diphosphate = 5-phospho-alpha-D-ribose 1-diphosphate + ATP. It functions in the pathway amino-acid biosynthesis; L-histidine biosynthesis; L-histidine from 5-phospho-alpha-D-ribose 1-diphosphate: step 1/9. In terms of biological role, catalyzes the condensation of ATP and 5-phosphoribose 1-diphosphate to form N'-(5'-phosphoribosyl)-ATP (PR-ATP). Has a crucial role in the pathway because the rate of histidine biosynthesis seems to be controlled primarily by regulation of the enzymatic activity. The polypeptide is ATP phosphoribosyltransferase (HIS1) (Candida glabrata (strain ATCC 2001 / BCRC 20586 / JCM 3761 / NBRC 0622 / NRRL Y-65 / CBS 138) (Yeast)).